An 81-amino-acid polypeptide reads, in one-letter code: Antitoxin VapB28 (81 aa).

In terms of biological role, antitoxin component of a type II toxin-antitoxin (TA) system. This is Antitoxin VapB28 (vapB28) from Mycobacterium tuberculosis (strain CDC 1551 / Oshkosh).